Consider the following 215-residue polypeptide: Orotate phosphoribosyltransferase (215 aa).

Lys-26 is a binding site for 5-phospho-alpha-D-ribose 1-diphosphate. 34–35 (FF) lines the orotate pocket. 5-phospho-alpha-D-ribose 1-diphosphate contacts are provided by residues 72 to 73 (YK), Arg-99, Lys-100, Lys-103, His-105, and 124 to 132 (DDVITAGTA). 2 residues coordinate orotate: Thr-128 and Arg-156.

It belongs to the purine/pyrimidine phosphoribosyltransferase family. PyrE subfamily. As to quaternary structure, homodimer. Mg(2+) serves as cofactor.

It catalyses the reaction orotidine 5'-phosphate + diphosphate = orotate + 5-phospho-alpha-D-ribose 1-diphosphate. It functions in the pathway pyrimidine metabolism; UMP biosynthesis via de novo pathway; UMP from orotate: step 1/2. Its function is as follows. Catalyzes the transfer of a ribosyl phosphate group from 5-phosphoribose 1-diphosphate to orotate, leading to the formation of orotidine monophosphate (OMP). This chain is Orotate phosphoribosyltransferase, found in Hahella chejuensis (strain KCTC 2396).